Consider the following 146-residue polypeptide: Hemoglobin subunit beta (146 aa).

Val-1 is modified (N-acetylvaline). The 145-residue stretch at 2–146 folds into the Globin domain; the sequence is HLTAEEKSAV…VATALAHKYH (145 aa). Residue Thr-12 is modified to Phosphothreonine. Ser-44 carries the post-translational modification Phosphoserine. Lys-59 is modified (N6-acetyllysine). His-63 serves as a coordination point for heme b. Lys-82 is modified (N6-acetyllysine). His-92 lines the heme b pocket. An S-nitrosocysteine modification is found at Cys-93. N6-acetyllysine is present on Lys-144.

Belongs to the globin family. Heterotetramer of two alpha chains and two beta chains. As to expression, red blood cells.

In terms of biological role, involved in oxygen transport from the lung to the various peripheral tissues. This chain is Hemoglobin subunit beta (HBB), found in Cebus albifrons (White-fronted capuchin).